A 73-amino-acid chain; its full sequence is Sec-independent protein translocase protein TatA (73 aa).

A helical membrane pass occupies residues 1–21 (MGSFSIWHWLIVLVIVMLVFG). Residues 43–73 (MKEGDDKAAPAKELRDSTTIDVDAKEKTRQQ) form a disordered region.

Belongs to the TatA/E family. As to quaternary structure, the Tat system comprises two distinct complexes: a TatABC complex, containing multiple copies of TatA, TatB and TatC subunits, and a separate TatA complex, containing only TatA subunits. Substrates initially bind to the TatABC complex, which probably triggers association of the separate TatA complex to form the active translocon.

The protein localises to the cell inner membrane. In terms of biological role, part of the twin-arginine translocation (Tat) system that transports large folded proteins containing a characteristic twin-arginine motif in their signal peptide across membranes. TatA could form the protein-conducting channel of the Tat system. This Cupriavidus pinatubonensis (strain JMP 134 / LMG 1197) (Cupriavidus necator (strain JMP 134)) protein is Sec-independent protein translocase protein TatA.